We begin with the raw amino-acid sequence, 103 residues long: MQNQRIRIRLKGFDHRLIDQSTAEIVETAKRTGAQVRGPIPLPTRKERFTVLISPHVNKDARDQYELRTHKRLVDIVEPTEKTVDALMRLDLAAGVDVQISLG.

This sequence belongs to the universal ribosomal protein uS10 family. As to quaternary structure, part of the 30S ribosomal subunit.

Involved in the binding of tRNA to the ribosomes. The sequence is that of Small ribosomal subunit protein uS10 from Shewanella amazonensis (strain ATCC BAA-1098 / SB2B).